Consider the following 698-residue polypeptide: MVFSYEHYMNLLFHLDNSKETVPPEIAKRIISNAIAPVITVTSTPLFDKHIQETYKVDSLYMLLRFFGGCVSDRDQANEAKVGQHEHEVCDASDSTDSIPKNKNLEVPNLSKKGSRSRSNSLFQRDSTQSQYIRFTRPLGDLIETRDANDMLFNYHSLEVFLDNYLKLVAANTDEMVPHNLLKKSIYHSFFSLAISSTNNLSPYETFNHPILSLIALDISNGEVYEDARDLLVNFKNLNHNTENFPIFMNTNEMLPVFLLCYNDDSQEEFEKCQALAKKLKKQLFVESILLALWKDSFIYDENSVIQLHQPVMSSLEEILFFLQAPTQTTLSLALINSIYDMLDYLVYDLMIPFMKRKVSFWEETILQPRKSLFNGAKFFKKFMNKNPVNGNHQHNSLTRDSQGNEYFASSSSEFLMRKLADWSMMLSDFKTAYSTYESLMDDLDAFPKYLASCIEWCAVSLLMGAQSIVTVKMIKNDINPLIERALATYENCSRIQRGKGKESNSLDVTEPVRSYETRCMILASELFLSLSNTWTSTPYAIQYLETILDECKLGPCSQIMVWERLSDCYNLRVDPRIKHRVGAMKKDAKDTEDLRGEHKYSTDHFTDEDILSEGLTRRRKAAFFRLIAAKKWAEQKQWRQVSWCLKDIESTYSEIKFLHGNGLILSKLKNQLNLKDVDSAPRPSEKNLTRTSVSFIG.

2 disordered regions span residues 82–125 (VGQH…LFQR) and 678–698 (VDSAPRPSEKNLTRTSVSFIG). The span at 678 to 689 (VDSAPRPSEKNL) shows a compositional bias: basic and acidic residues.

This sequence belongs to the TRS85 family. Part of the multisubunit TRAPP (transport protein particle) III complex composed of BET3, BET5, TRS20, TRS23, TRS31, TRS33 and TRS85.

The protein resides in the preautophagosomal structure. In terms of biological role, specific subunit of the TRAPP III complex that acts as an autophagy-specific guanine nucleotide exchange factor (GEF) for YPT1. TRS85 directs the TRAPP III complex to the phagophore assembly site (PAS) that is involved in autophagosome formation. Required for membrane expansion during autophagy and the CVT pathway. Required for sporulation. Has a role late in meiosis following DNA replication. This chain is Trafficking protein particle complex III-specific subunit 85 (TRS85), found in Saccharomyces cerevisiae (strain ATCC 204508 / S288c) (Baker's yeast).